Consider the following 201-residue polypeptide: Diadenylate cyclase CdaS (201 aa).

The DAC domain maps to 54–201; the sequence is QTLAATYYIQ…LNGILYTISL (148 aa).

This sequence belongs to the adenylate cyclase family. DacB/CdaS subfamily. In terms of assembly, probably forms a homohexamer. Mg(2+) serves as cofactor.

The enzyme catalyses 2 ATP = 3',3'-c-di-AMP + 2 diphosphate. One of 3 paralogous diadenylate cyclases (DAC) in this bacteria catalyzing the condensation of 2 ATP molecules into cyclic di-AMP (c-di-AMP). It has slow DAC activity with ADP as a substrate and may have weak ADPase activity. Required for efficient spore formation, whereas in B.subtilis, it is required for efficient spore germination. It is produced under the control of different sigma factors in the two bacteria. It is also required for parasporal crystal formation. In Bacillus thuringiensis (strain BMB171), this protein is Diadenylate cyclase CdaS.